The sequence spans 449 residues: Tubulin beta-6 chain (449 aa).

Residues glutamine 11, glutamate 69, serine 138, glycine 142, threonine 143, glycine 144, asparagine 204, and asparagine 226 each coordinate GTP. Mg(2+) is bound at residue glutamate 69. Residues 425–449 (YQDATADDEGEYEEDEDEEEILDHE) are disordered. Residues 429 to 449 (TADDEGEYEEDEDEEEILDHE) show a composition bias toward acidic residues.

The protein belongs to the tubulin family. In terms of assembly, dimer of alpha and beta chains. A typical microtubule is a hollow water-filled tube with an outer diameter of 25 nm and an inner diameter of 15 nM. Alpha-beta heterodimers associate head-to-tail to form protofilaments running lengthwise along the microtubule wall with the beta-tubulin subunit facing the microtubule plus end conferring a structural polarity. Microtubules usually have 13 protofilaments but different protofilament numbers can be found in some organisms and specialized cells. Mg(2+) is required as a cofactor.

It is found in the cytoplasm. It localises to the cytoskeleton. Tubulin is the major constituent of microtubules, a cylinder consisting of laterally associated linear protofilaments composed of alpha- and beta-tubulin heterodimers. Microtubules grow by the addition of GTP-tubulin dimers to the microtubule end, where a stabilizing cap forms. Below the cap, tubulin dimers are in GDP-bound state, owing to GTPase activity of alpha-tubulin. The polypeptide is Tubulin beta-6 chain (TUBB6) (Arabidopsis thaliana (Mouse-ear cress)).